A 329-amino-acid chain; its full sequence is Homeobox protein ceh-40 (329 aa).

The region spanning 3–186 is the PBC domain; the sequence is EASKSIMDLL…VIQLKKRYLD (184 aa). The PBC-A stretch occupies residues 10 to 90; the sequence is DLLSEVVKIT…EGVAGPDDSL (81 aa). The segment at 93-186 is PBC-B; sequence IQEAAGTDQY…VIQLKKRYLD (94 aa). The homeobox; TALE-type DNA-binding region spans 187-249; that stretch reads ARRKRRNFSK…NKRIRYKKTM (63 aa). The disordered stretch occupies residues 248–275; that stretch reads TMAKNEDERRENRKPEDRPPPGAPGAPY. A compositionally biased stretch (basic and acidic residues) spans 250-266; the sequence is AKNEDERRENRKPEDRP.

The protein belongs to the TALE/PBX homeobox family. Expressed in head dopaminergic neurons.

The protein localises to the nucleus. Its function is as follows. Plays a role in regulating gene expression in dopaminergic neurons, acting redundantly with homeobox protein ceh-20 in head neurons. May activate dopamine pathway genes in concert with ETS domain-containing protein ast-1, and homeobox proteins ceh-43 and ceh-20. In Caenorhabditis elegans, this protein is Homeobox protein ceh-40 (ceh-40).